The chain runs to 847 residues: Alpha-glucuronidase (847 aa).

An N-terminal signal peptide occupies residues 1–19; that stretch reads MVIRSLLLLLLAAIVPVFA. N-linked (GlcNAc...) asparagine glycans are attached at residues Asn52, Asn238, Asn321, Asn353, Asn586, Asn692, Asn740, and Asn767.

The protein belongs to the glycosyl hydrolase 67 family.

It is found in the secreted. It catalyses the reaction an alpha-D-glucuronoside + H2O = D-glucuronate + an alcohol. In terms of biological role, releases 4-O-methylglucuronic acid from xylan. In Hypocrea jecorina (Trichoderma reesei), this protein is Alpha-glucuronidase.